A 181-amino-acid chain; its full sequence is Ribonuclease HII (181 aa).

In terms of domain architecture, RNase H type-2 spans 1-181 (MICGIDEVGR…SLHRKNFKLI (181 aa)). Residues Asp-6, Glu-7, and Asp-98 each contribute to the a divalent metal cation site.

This sequence belongs to the RNase HII family. Mn(2+) serves as cofactor. The cofactor is Mg(2+).

The protein localises to the cytoplasm. It carries out the reaction Endonucleolytic cleavage to 5'-phosphomonoester.. In terms of biological role, endonuclease that specifically degrades the RNA of RNA-DNA hybrids. The protein is Ribonuclease HII of Borreliella afzelii (strain PKo) (Borrelia afzelii).